The chain runs to 186 residues: Elongation factor P (186 aa).

It belongs to the elongation factor P family.

The protein resides in the cytoplasm. Its pathway is protein biosynthesis; polypeptide chain elongation. In terms of biological role, involved in peptide bond synthesis. Stimulates efficient translation and peptide-bond synthesis on native or reconstituted 70S ribosomes in vitro. Probably functions indirectly by altering the affinity of the ribosome for aminoacyl-tRNA, thus increasing their reactivity as acceptors for peptidyl transferase. The chain is Elongation factor P from Shewanella frigidimarina (strain NCIMB 400).